Consider the following 442-residue polypeptide: Tubulin beta chain (442 aa).

Positions 11, 67, 136, 140, 141, 142, and 202 each coordinate GTP. Position 67 (Glu67) interacts with Mg(2+).

It belongs to the tubulin family. In terms of assembly, dimer of alpha and beta chains. A typical microtubule is a hollow water-filled tube with an outer diameter of 25 nm and an inner diameter of 15 nM. Alpha-beta heterodimers associate head-to-tail to form protofilaments running lengthwise along the microtubule wall with the beta-tubulin subunit facing the microtubule plus end conferring a structural polarity. Microtubules usually have 13 protofilaments but different protofilament numbers can be found in some organisms and specialized cells. The cofactor is Mg(2+).

The protein resides in the cytoplasm. It is found in the cytoskeleton. In terms of biological role, tubulin is the major constituent of microtubules, a cylinder consisting of laterally associated linear protofilaments composed of alpha- and beta-tubulin heterodimers. Microtubules grow by the addition of GTP-tubulin dimers to the microtubule end, where a stabilizing cap forms. Below the cap, tubulin dimers are in GDP-bound state, owing to GTPase activity of alpha-tubulin. This chain is Tubulin beta chain (TUBB), found in Euglena gracilis.